Reading from the N-terminus, the 195-residue chain is ATP-dependent Clp protease proteolytic subunit (195 aa).

The Nucleophile role is filled by Ser99. His124 is a catalytic residue.

This sequence belongs to the peptidase S14 family. Fourteen ClpP subunits assemble into 2 heptameric rings which stack back to back to give a disk-like structure with a central cavity, resembling the structure of eukaryotic proteasomes.

It localises to the cytoplasm. The catalysed reaction is Hydrolysis of proteins to small peptides in the presence of ATP and magnesium. alpha-casein is the usual test substrate. In the absence of ATP, only oligopeptides shorter than five residues are hydrolyzed (such as succinyl-Leu-Tyr-|-NHMec, and Leu-Tyr-Leu-|-Tyr-Trp, in which cleavage of the -Tyr-|-Leu- and -Tyr-|-Trp bonds also occurs).. Its function is as follows. Cleaves peptides in various proteins in a process that requires ATP hydrolysis. Has a chymotrypsin-like activity. Plays a major role in the degradation of misfolded proteins. This Coxiella burnetii (strain RSA 331 / Henzerling II) protein is ATP-dependent Clp protease proteolytic subunit.